Here is a 266-residue protein sequence, read N- to C-terminus: Undecaprenyl-diphosphatase (266 aa).

The next 8 helical transmembrane spans lie at M1–I21, Q39–F59, W87–I107, F111–A131, M144–T164, A183–V203, A218–L238, and I244–L264.

Belongs to the UppP family.

It localises to the cell inner membrane. It carries out the reaction di-trans,octa-cis-undecaprenyl diphosphate + H2O = di-trans,octa-cis-undecaprenyl phosphate + phosphate + H(+). Its function is as follows. Catalyzes the dephosphorylation of undecaprenyl diphosphate (UPP). Confers resistance to bacitracin. In Shewanella frigidimarina (strain NCIMB 400), this protein is Undecaprenyl-diphosphatase.